The following is a 342-amino-acid chain: MDVQQFDFDLPEHLIAQHPLEDRTSSRLLVLEKQTGNIVHQQFTHLIDHLQAGDVLVMNDSRVLPARLIGEKTDTGAKIEILLLKSLGEDRWETLVKPGKRMKPGTEVVFGNGLLRCVCEDVTETGGRIVRFLYEGIFYEILDQLGSMPLPPYIHAQLEDSERYQTVYAKERGSAAAPTAGLHFTKPYLEQIAAKGVQLAYVTLHVGLGTFRPVSADSVEEHVMHAEYYEIPEETVELVNQAKAEGRRVIAVGTTSCRTLETVGRANGGKLVATSGWTDIFIYPGYTFSILDGLLTNFHLPKSTLVMLVSALAGKENVMRAYKRAVEEEYRFFSFGDAMLIL.

The protein belongs to the QueA family. In terms of assembly, monomer.

Its subcellular location is the cytoplasm. The enzyme catalyses 7-aminomethyl-7-carbaguanosine(34) in tRNA + S-adenosyl-L-methionine = epoxyqueuosine(34) in tRNA + adenine + L-methionine + 2 H(+). Its pathway is tRNA modification; tRNA-queuosine biosynthesis. Transfers and isomerizes the ribose moiety from AdoMet to the 7-aminomethyl group of 7-deazaguanine (preQ1-tRNA) to give epoxyqueuosine (oQ-tRNA). The protein is S-adenosylmethionine:tRNA ribosyltransferase-isomerase of Brevibacillus brevis (strain 47 / JCM 6285 / NBRC 100599).